Here is a 183-residue protein sequence, read N- to C-terminus: ATP synthase subunit delta (183 aa).

The protein belongs to the ATPase delta chain family. As to quaternary structure, F-type ATPases have 2 components, F(1) - the catalytic core - and F(0) - the membrane proton channel. F(1) has five subunits: alpha(3), beta(3), gamma(1), delta(1), epsilon(1). F(0) has three main subunits: a(1), b(2) and c(10-14). The alpha and beta chains form an alternating ring which encloses part of the gamma chain. F(1) is attached to F(0) by a central stalk formed by the gamma and epsilon chains, while a peripheral stalk is formed by the delta and b chains.

It localises to the cell membrane. Functionally, f(1)F(0) ATP synthase produces ATP from ADP in the presence of a proton or sodium gradient. F-type ATPases consist of two structural domains, F(1) containing the extramembraneous catalytic core and F(0) containing the membrane proton channel, linked together by a central stalk and a peripheral stalk. During catalysis, ATP synthesis in the catalytic domain of F(1) is coupled via a rotary mechanism of the central stalk subunits to proton translocation. Its function is as follows. This protein is part of the stalk that links CF(0) to CF(1). It either transmits conformational changes from CF(0) to CF(1) or is implicated in proton conduction. The protein is ATP synthase subunit delta of Mesoplasma florum (strain ATCC 33453 / NBRC 100688 / NCTC 11704 / L1) (Acholeplasma florum).